The primary structure comprises 575 residues: Manganese transporter SMF1 (575 aa).

Residues 1-70 (MVNVGPSHAA…TYVSKRQVMR (70 aa)) are Extracellular-facing. At serine 24 the chain carries Phosphoserine. Glycyl lysine isopeptide (Lys-Gly) (interchain with G-Cter in ubiquitin) cross-links involve residues lysine 33 and lysine 34. Residues 71 to 91 (DIFAKYLKFIGPGLMVSVAYI) form a helical membrane-spanning segment. Over 92–108 (DPGNYSTAVDAGASNQF) the chain is Cytoplasmic. The chain crosses the membrane as a helical span at residues 109 to 129 (SLLCIILLSNFIAIFLQCLCI). Topologically, residues 130–156 (KLGSVTGLDLSRACREYLPRWLNWTLY) are extracellular. Residues 157 to 177 (FFAECAVIATDIAEVIGTAIA) form a helical membrane-spanning segment. The Cytoplasmic segment spans residues 178 to 179 (LN). The chain crosses the membrane as a helical span at residues 180-200 (ILIKVPLPAGVAITVVDVFLI). The Extracellular portion of the chain corresponds to 201 to 218 (MFTYKPGASSIRFIRIFE). Residues 219 to 239 (CFVAVLVVGVCICFAIELAYI) form a helical membrane-spanning segment. The Cytoplasmic portion of the chain corresponds to 240–266 (PKSTSVKQVFRGFVPSAQMFDHNGIYT). A helical membrane pass occupies residues 267-287 (AISILGATVMPHSLFLGSALV). Residues 288 to 344 (QPRLLDYDVKHGNYTVSEEQDKVKKSKSTEEIMEEKYFNYRPTNAAIKYCMKYSMVE) lie on the Extracellular side of the membrane. The helical transmembrane segment at 345–365 (LSITLFTLALFVNCAILVVAG) threads the bilayer. The Cytoplasmic portion of the chain corresponds to 366–396 (STLYNSPEADGADLFTIHELLSRNLAPAAGT). A helical transmembrane segment spans residues 397–417 (IFMLALLLSGQSAGVVCTMSG). The Extracellular segment spans residues 418-463 (QIVSEGHINWKLQPWQRRLATRCISIIPCLVISICIGREALSKALN). The chain crosses the membrane as a helical span at residues 464–484 (ASQVVLSIVLPFLVAPLIFFT). The Cytoplasmic segment spans residues 485–543 (CKKSIMKTEITVDHTEEDSHNHQNNNDRSAGSVIEQDGSSGMEIENGKDVKIVYMANNW). The interval 498–517 (HTEEDSHNHQNNNDRSAGSV) is disordered. The helical transmembrane segment at 544–564 (IITVIAIIVWLFLSLLNVYAI) threads the bilayer. The Extracellular segment spans residues 565–575 (VQLGMSHGDIS).

This sequence belongs to the NRAMP family.

The protein resides in the cell membrane. It carries out the reaction Mn(2+)(in) = Mn(2+)(out). High-affinity manganese transporter involved in manganese uptake from the extracellular environment. Also contributes to cellular accumulation of other divalent metal ions such as cadmium, cobalt, copper, iron and nickel. The chain is Manganese transporter SMF1 (SMF1) from Saccharomyces cerevisiae (strain ATCC 204508 / S288c) (Baker's yeast).